Consider the following 435-residue polypeptide: Serine--tRNA ligase (435 aa).

240–242 serves as a coordination point for L-serine; it reads TAE. Residue 271 to 273 coordinates ATP; the sequence is RSE. E294 contacts L-serine. Residue 358–361 coordinates ATP; sequence EISS. S393 is an L-serine binding site.

It belongs to the class-II aminoacyl-tRNA synthetase family. Type-1 seryl-tRNA synthetase subfamily. As to quaternary structure, homodimer. The tRNA molecule binds across the dimer.

It is found in the cytoplasm. It catalyses the reaction tRNA(Ser) + L-serine + ATP = L-seryl-tRNA(Ser) + AMP + diphosphate + H(+). The enzyme catalyses tRNA(Sec) + L-serine + ATP = L-seryl-tRNA(Sec) + AMP + diphosphate + H(+). It functions in the pathway aminoacyl-tRNA biosynthesis; selenocysteinyl-tRNA(Sec) biosynthesis; L-seryl-tRNA(Sec) from L-serine and tRNA(Sec): step 1/1. Functionally, catalyzes the attachment of serine to tRNA(Ser). Is also able to aminoacylate tRNA(Sec) with serine, to form the misacylated tRNA L-seryl-tRNA(Sec), which will be further converted into selenocysteinyl-tRNA(Sec). This is Serine--tRNA ligase from Cupriavidus metallidurans (strain ATCC 43123 / DSM 2839 / NBRC 102507 / CH34) (Ralstonia metallidurans).